Consider the following 478-residue polypeptide: Isoeugenol monooxygenase (478 aa).

4 residues coordinate Fe cation: histidine 167, histidine 218, histidine 282, and histidine 471.

The protein belongs to the carotenoid oxygenase family. Fe(2+) is required as a cofactor.

The enzyme catalyses (E)-isoeugenol + O2 = vanillin + acetaldehyde. With respect to regulation, inhibited by Co(2+), Ni(2+) and Zn(2+), which may inhibit enzyme activity by replacing iron in the catalytic residues. Inhibited by incubation with high concentrations of the iron chelators 1,10-phenanthroline and Tiron. However, iron is not completely removed by the chelators, suggesting that iron is tightly bound to the enzyme. In terms of biological role, involved in isoeugenol degradation. Catalyzes the oxidative cleavage of the side chain double-bond of isoeugenol to form vanillin and acetaldehyde. The chain is Isoeugenol monooxygenase from Pseudomonas nitroreducens.